Reading from the N-terminus, the 307-residue chain is Serine/threonine-protein phosphatase 4 catalytic subunit (307 aa).

At alanine 2 the chain carries N-acetylalanine. Mn(2+) is bound by residues aspartate 54, histidine 56, aspartate 82, and asparagine 114. The active-site Proton donor is the histidine 115. Histidine 164 and histidine 238 together coordinate Mn(2+). At leucine 307 the chain carries Leucine methyl ester.

It belongs to the PPP phosphatase family. PP-4 (PP-X) subfamily. In terms of assembly, serine/threonine-protein phosphatase 4 (PP4) occurs in different assemblies of the catalytic and one or more regulatory subunits. Component of the PP4 complexes PPP4C-PPP4R1, PPP4C-PPP4R2, PPP4C-PPP4R2-PPP4R3A, PPP4C-PPP4R2-PPP4R3B and PPP4C-PPP4R4. The PPP4C-PPP4R2 complex appears to be a tetramer composed of 2 molecules of PPP4C and 2 molecules of PPP4R2. Interacts with REL, NFKB1/p50 and RELA. Interacts with SMN1 and GEMIN4. Interacts with IRS4 (phosphorylated). Interacts with SMEK1/PPP4R3A; the interaction requires PP4R2. Interacts with HDAC3. It depends on Mn(2+) as a cofactor. Methylation at the C-terminal Leu-307 is critical for interactions with regulatory subunits and functions in DNA repair.

It localises to the cytoplasm. Its subcellular location is the nucleus. It is found in the cytoskeleton. The protein localises to the microtubule organizing center. The protein resides in the centrosome. It catalyses the reaction O-phospho-L-seryl-[protein] + H2O = L-seryl-[protein] + phosphate. The catalysed reaction is O-phospho-L-threonyl-[protein] + H2O = L-threonyl-[protein] + phosphate. Protein phosphatase that is involved in many processes such as microtubule organization at centrosomes, maturation of spliceosomal snRNPs, apoptosis, DNA repair, tumor necrosis factor (TNF)-alpha signaling, activation of c-Jun N-terminal kinase MAPK8, regulation of histone acetylation, DNA damage checkpoint signaling, NF-kappa-B activation and cell migration. The PPP4C-PPP4R1 PP4 complex may play a role in dephosphorylation and regulation of HDAC3. The PPP4C-PPP4R2-PPP4R3A PP4 complex specifically dephosphorylates H2AX phosphorylated on Ser-140 (gamma-H2AX) generated during DNA replication and required for DNA DSB repair. Dephosphorylates NDEL1 at CDK1 phosphorylation sites and negatively regulates CDK1 activity in interphase. In response to DNA damage, catalyzes RPA2 dephosphorylation, an essential step for DNA repair since it allows the efficient RPA2-mediated recruitment of RAD51 to chromatin. This Oryctolagus cuniculus (Rabbit) protein is Serine/threonine-protein phosphatase 4 catalytic subunit (PPP4C).